A 183-amino-acid chain; its full sequence is MDIDPYKEFGASVELLSFLPSDFFPSIRDLLDTASALYREALESPEHCSPHHTALRQAILCWGELMNLATWVGGNLEDPASRELVVSYVNVNMGLKLRQILWFHISCLTFGRETVLEYLVSFGVWIRTPTAYRPPNAPILSTLPENAVVRRRGRSPRRRTPSPRRRRSQSPRRRRSQSRGSQC.

Residues 143–183 form a disordered region; sequence LPENAVVRRRGRSPRRRTPSPRRRRSQSPRRRRSQSRGSQC. Over residues 149-177 the composition is skewed to basic residues; that stretch reads VRRRGRSPRRRTPSPRRRRSQSPRRRRSQ. Residues Ser-155, Ser-162, and Ser-170 each carry the phosphoserine; by host modification. The 1; half-length repeat unit spans residues 155 to 161; sequence SPRRRTP. Positions 155–177 are 3 X 8 AA repeats of S-P-R-R-R-[PR]-S-Q; the sequence is SPRRRTPSPRRRRSQSPRRRRSQ. The short motif at 158–175 is the Bipartite nuclear localization signal element; sequence RRTPSPRRRRSQSPRRRR. 2 tandem repeats follow at residues 162–169 and 170–177. Residues 177–183 are RNA binding; it reads QSRGSQC.

It belongs to the orthohepadnavirus core antigen family. As to quaternary structure, homodimerizes, then multimerizes. Interacts with cytosol exposed regions of viral L glycoprotein present in the reticulum-to-Golgi compartment. Interacts with human FLNB. Phosphorylated form interacts with host importin alpha; this interaction depends on the exposure of the NLS, which itself depends upon genome maturation and/or phosphorylation of the capsid protein. Interacts with host NUP153. Post-translationally, phosphorylated by host SRPK1, SRPK2, and maybe protein kinase C or GAPDH. Phosphorylation is critical for pregenomic RNA packaging. Protein kinase C phosphorylation is stimulated by HBx protein and may play a role in transport of the viral genome to the nucleus at the late step during the viral replication cycle.

The protein localises to the virion. It is found in the host cytoplasm. Its function is as follows. Self assembles to form an icosahedral capsid. Most capsids appear to be large particles with an icosahedral symmetry of T=4 and consist of 240 copies of capsid protein, though a fraction forms smaller T=3 particles consisting of 180 capsid proteins. Entering capsids are transported along microtubules to the nucleus. Phosphorylation of the capsid is thought to induce exposure of nuclear localization signal in the C-terminal portion of the capsid protein that allows binding to the nuclear pore complex via the importin (karyopherin-) alpha and beta. Capsids are imported in intact form through the nuclear pore into the nuclear basket, where it probably binds NUP153. Only capsids that contain the mature viral genome can release the viral DNA and capsid protein into the nucleoplasm. Immature capsids get stuck in the basket. Capsids encapsulate the pre-genomic RNA and the P protein. Pre-genomic RNA is reverse-transcribed into DNA while the capsid is still in the cytoplasm. The capsid can then either be directed to the nucleus, providing more genomes for transcription, or bud through the endoplasmic reticulum to provide new virions. This Homo sapiens (Human) protein is Capsid protein.